A 144-amino-acid polypeptide reads, in one-letter code: D-aminoacyl-tRNA deacylase (144 aa).

A Gly-cisPro motif, important for rejection of L-amino acids motif is present at residues G136–P137.

Belongs to the DTD family. As to quaternary structure, homodimer.

The protein localises to the cytoplasm. It catalyses the reaction glycyl-tRNA(Ala) + H2O = tRNA(Ala) + glycine + H(+). The catalysed reaction is a D-aminoacyl-tRNA + H2O = a tRNA + a D-alpha-amino acid + H(+). In terms of biological role, an aminoacyl-tRNA editing enzyme that deacylates mischarged D-aminoacyl-tRNAs. Also deacylates mischarged glycyl-tRNA(Ala), protecting cells against glycine mischarging by AlaRS. Acts via tRNA-based rather than protein-based catalysis; rejects L-amino acids rather than detecting D-amino acids in the active site. By recycling D-aminoacyl-tRNA to D-amino acids and free tRNA molecules, this enzyme counteracts the toxicity associated with the formation of D-aminoacyl-tRNA entities in vivo and helps enforce protein L-homochirality. The protein is D-aminoacyl-tRNA deacylase of Actinobacillus pleuropneumoniae serotype 5b (strain L20).